Reading from the N-terminus, the 314-residue chain is Coproporphyrin III ferrochelatase (314 aa).

2 residues coordinate Fe(2+): His186 and Glu268.

This sequence belongs to the ferrochelatase family.

The protein localises to the cytoplasm. The catalysed reaction is Fe-coproporphyrin III + 2 H(+) = coproporphyrin III + Fe(2+). The protein operates within porphyrin-containing compound metabolism; protoheme biosynthesis. Functionally, involved in coproporphyrin-dependent heme b biosynthesis. Catalyzes the insertion of ferrous iron into coproporphyrin III to form Fe-coproporphyrin III. The protein is Coproporphyrin III ferrochelatase of Lactococcus lactis subsp. lactis (strain IL1403) (Streptococcus lactis).